A 403-amino-acid polypeptide reads, in one-letter code: MALPPVYIVSTARTPIGSFQGSLSSLTYSDLGAHAVKAALAKVPQIKPQDVDEIVFGGVLQANVGQAPARQVALKAGLPDSIVASTINKVCASGMKAVIIGAQNIICGTSDIVVVGGAESMSNTPYYLPSARSGARYGDAIMVDGVQKDGLLDVYEEKLMGVAAEKCAKDHGFSREDQDNFAINSYKKAGKALSEGKFKSEIAPVTIKGFRGKPDTVIENDEEIGKFNEERLKSARTVFQKENGTVTAPNASKLNDGGAALVLVSEAKLKQLGLKPLAKISGWGEAARTPFDFTIAPALAVPKAVKHAGLTVDRVDFFELNEAFSVVGLANAELVNIPLEKLNVYGGAVAMGHPLGCSGARIIVTLLSVLTQEGGRFGVAGVCNGGGGASAVVIEKIDADAKL.

Residue cysteine 91 is the Acyl-thioester intermediate of the active site. Residues histidine 353 and cysteine 383 each act as proton acceptor in the active site. The Microbody targeting signal motif lies at 401 to 403 (AKL).

The protein belongs to the thiolase-like superfamily. Thiolase family. In terms of assembly, multimeric.

It localises to the peroxisome. It catalyses the reaction 2 acetyl-CoA = acetoacetyl-CoA + CoA. It functions in the pathway metabolic intermediate biosynthesis; (R)-mevalonate biosynthesis; (R)-mevalonate from acetyl-CoA: step 1/3. The protein is Acetyl-CoA acetyltransferase IA (PACTA) of Candida tropicalis (Yeast).